Reading from the N-terminus, the 320-residue chain is Serpentine receptor class delta-40 (320 aa).

Helical transmembrane passes span isoleucine 12–isoleucine 32, methionine 42–cysteine 62, tyrosine 95–phenylalanine 115, isoleucine 133–isoleucine 153, leucine 189–phenylalanine 209, alanine 243–threonine 263, and phenylalanine 273–valine 293.

Belongs to the nematode receptor-like protein srd family.

Its subcellular location is the membrane. This chain is Serpentine receptor class delta-40 (srd-40), found in Caenorhabditis elegans.